The sequence spans 455 residues: tRNA-2-methylthio-N(6)-dimethylallyladenosine synthase (455 aa).

An MTTase N-terminal domain is found at 18–133 (KKLFIETYGC…LPELIAAVEA (116 aa)). The [4Fe-4S] cluster site is built by C27, C63, C97, C171, C175, and C178. A Radical SAM core domain is found at 157–390 (CGNHISGFVS…IALQNRLSAE (234 aa)). The 63-residue stretch at 393–455 (QRCIGKTYEV…SSATLKGEEV (63 aa)) folds into the TRAM domain.

Belongs to the methylthiotransferase family. MiaB subfamily. As to quaternary structure, monomer. The cofactor is [4Fe-4S] cluster.

It is found in the cytoplasm. It catalyses the reaction N(6)-dimethylallyladenosine(37) in tRNA + (sulfur carrier)-SH + AH2 + 2 S-adenosyl-L-methionine = 2-methylsulfanyl-N(6)-dimethylallyladenosine(37) in tRNA + (sulfur carrier)-H + 5'-deoxyadenosine + L-methionine + A + S-adenosyl-L-homocysteine + 2 H(+). Functionally, catalyzes the methylthiolation of N6-(dimethylallyl)adenosine (i(6)A), leading to the formation of 2-methylthio-N6-(dimethylallyl)adenosine (ms(2)i(6)A) at position 37 in tRNAs that read codons beginning with uridine. The chain is tRNA-2-methylthio-N(6)-dimethylallyladenosine synthase from Bacteroides thetaiotaomicron (strain ATCC 29148 / DSM 2079 / JCM 5827 / CCUG 10774 / NCTC 10582 / VPI-5482 / E50).